A 107-amino-acid polypeptide reads, in one-letter code: UPF0145 protein BH1111 (107 aa).

This sequence belongs to the UPF0145 family.

The chain is UPF0145 protein BH1111 from Halalkalibacterium halodurans (strain ATCC BAA-125 / DSM 18197 / FERM 7344 / JCM 9153 / C-125) (Bacillus halodurans).